Consider the following 242-residue polypeptide: NAD-dependent protein deacetylase (242 aa).

Residues 1-242 form the Deacetylase sirtuin-type domain; sequence MQQFEEVRTI…EFVEGLSSIK (242 aa). Residues Ala23, Thr27, Phe34, Arg35, Gln102, Ile104, Asp105, and His120 each coordinate NAD(+). Phe34 is a nicotinamide binding site. The nicotinamide site is built by Ile104 and Asp105. The active-site Proton acceptor is the His120. Residues Cys128, Cys131, Cys148, and Cys151 each coordinate Zn(2+). Residues Thr187, Ser188, Asn213, and Ile231 each contribute to the NAD(+) site.

This sequence belongs to the sirtuin family. Class U subfamily. Requires Zn(2+) as cofactor.

The protein resides in the cytoplasm. The enzyme catalyses N(6)-acetyl-L-lysyl-[protein] + NAD(+) + H2O = 2''-O-acetyl-ADP-D-ribose + nicotinamide + L-lysyl-[protein]. In terms of biological role, NAD-dependent protein deacetylase which modulates the activities of several enzymes which are inactive in their acetylated form. This chain is NAD-dependent protein deacetylase, found in Bacillus anthracis.